Consider the following 126-residue polypeptide: MSAPNPKAFPLADAALTQQILDVVQQAANLRQLKKGANEATKTLNRGISEFIIMAADCEPIEILLHLPLLCEDKNVPYVFVPSRVALGRACGVSRPVIAASITTNDASAIKTQIYAVKDKIETLLI.

Belongs to the eukaryotic ribosomal protein eL8 family. As to quaternary structure, binds to the C'/D and B/C motifs in U3 snoRNA. Component of the U4/U6-U5 tri-snRNP complex composed of the U4, U6 and U5 snRNAs and at least PRP3, PRP4, PRP6, PRP8, PRP18, PRP31, PRP38, SNU13, SNU23, SNU66, SNU114, SPP381, SMB1, SMD1, SMD2, SMD3, SMX2, SMX3, LSM2, LSM3, LSM4, LSM5, LSM6, LSM7, LSM8, BRR2 and DIB1. Binds to the 5'-stem-loop of U4 snRNA. Component of the ribosomal small subunit (SSU) processome composed of at least 40 protein subunits and snoRNA U3.

It is found in the nucleus. The protein localises to the nucleolus. Common component of the spliceosome and rRNA processing machinery. In association with the spliceosomal U4/U6.U5 tri-snRNP particle, required for splicing of pre-mRNA. In association with box C/D snoRNPs, required for processing of pre-ribosomal RNA (rRNA) and site-specific 2'-O-methylation of substrate RNAs. Essential for the accumulation and stability of U4 snRNA, U6 snRNA, and box C/D snoRNAs. This chain is 13 kDa ribonucleoprotein-associated protein (SNU13), found in Saccharomyces cerevisiae (strain ATCC 204508 / S288c) (Baker's yeast).